The following is a 641-amino-acid chain: Anthrax toxin receptor-like (641 aa).

Residues 1–27 form the signal peptide; the sequence is MMSHSPSMPCSALFLLLLLLLPPTFKG. Over 28–363 the chain is Extracellular; that stretch reads GSLRYHGPGW…ASQGIVFKRT (336 aa). The VWFA domain occupies 76 to 247; sequence DLYLVLDKSG…SALEGVVDPL (172 aa). A divalent metal cation is bound by residues Ser-84, Ser-86, and Thr-150. Residues 364–384 form a helical membrane-spanning segment; it reads WLMFLPVLLVTLLLLCCTWKL. The Cytoplasmic portion of the chain corresponds to 385 to 641; it reads CIKPKKLPPP…FPPISKGPKF (257 aa). The tract at residues 391–455 is disordered; that stretch reads LPPPPPKPEK…ARPPPAPLPA (65 aa). A compositionally biased stretch (pro residues) spans 407–436; that stretch reads PPPSSPPAPGRGPGPGPSAGPGPGPGPSPG.

It belongs to the ATR family.

It localises to the membrane. The polypeptide is Anthrax toxin receptor-like (Antxrl) (Mus musculus (Mouse)).